The sequence spans 224 residues: UPF0758 protein mma_2551 (224 aa).

Residues 102–224 (SLNSPQAVKK…VYSFAEHGHL (123 aa)) enclose the MPN domain. Zn(2+) contacts are provided by H173, H175, and D186. The JAMM motif signature appears at 173–186 (HNHPSGSSEPSAAD).

The protein belongs to the UPF0758 family.

The chain is UPF0758 protein mma_2551 from Janthinobacterium sp. (strain Marseille) (Minibacterium massiliensis).